The sequence spans 280 residues: ATP synthase gamma chain (280 aa).

It belongs to the ATPase gamma chain family. In terms of assembly, F-type ATPases have 2 components, CF(1) - the catalytic core - and CF(0) - the membrane proton channel. CF(1) has five subunits: alpha(3), beta(3), gamma(1), delta(1), epsilon(1). CF(0) has three main subunits: a, b and c.

It is found in the cell membrane. Its function is as follows. Produces ATP from ADP in the presence of a proton gradient across the membrane. The gamma chain is believed to be important in regulating ATPase activity and the flow of protons through the CF(0) complex. This is ATP synthase gamma chain from Mycoplasma capricolum subsp. capricolum (strain California kid / ATCC 27343 / NCTC 10154).